The chain runs to 296 residues: Cell division protein DivIB (296 aa).

The Cytoplasmic portion of the chain corresponds to 1–29 (MTKEIPKINNEYLKEKRKKQRIQQRRVQR). The helical transmembrane segment at 30 to 50 (MIVGILVVIVLLILVYMFTPI) threads the bilayer. Positions 51 to 119 (SHIKSADIKG…NPIEVNVKEH (69 aa)) constitute a POTRA domain. The Extracellular segment spans residues 51-296 (SHIKSADIKG…NKIKDEESSE (246 aa)). Over residues 256 to 273 (NNGQTSSASAKEVQSGTA) the composition is skewed to polar residues. Residues 256-296 (NNGQTSSASAKEVQSGTASEDKAKDDLQKALNKIKDEESSE) form a disordered region. Basic and acidic residues predominate over residues 274 to 296 (SEDKAKDDLQKALNKIKDEESSE).

The protein belongs to the FtsQ/DivIB family. DivIB subfamily.

The protein localises to the cell membrane. In terms of biological role, cell division protein that may be involved in stabilizing or promoting the assembly of the division complex. This Staphylococcus pseudintermedius (strain HKU10-03) protein is Cell division protein DivIB.